The primary structure comprises 270 residues: Formamidopyrimidine-DNA glycosylase (270 aa).

The active-site Schiff-base intermediate with DNA is Pro-2. Glu-3 functions as the Proton donor in the catalytic mechanism. Lys-58 acts as the Proton donor; for beta-elimination activity in catalysis. DNA contacts are provided by His-91, Arg-110, and Arg-151. An FPG-type zinc finger spans residues 236–270 (AVYGREGEPCTHCGAPLQGVRIGGRATIYCSQCQR). Catalysis depends on Arg-260, which acts as the Proton donor; for delta-elimination activity.

Belongs to the FPG family. As to quaternary structure, monomer. Requires Zn(2+) as cofactor.

It carries out the reaction Hydrolysis of DNA containing ring-opened 7-methylguanine residues, releasing 2,6-diamino-4-hydroxy-5-(N-methyl)formamidopyrimidine.. It catalyses the reaction 2'-deoxyribonucleotide-(2'-deoxyribose 5'-phosphate)-2'-deoxyribonucleotide-DNA = a 3'-end 2'-deoxyribonucleotide-(2,3-dehydro-2,3-deoxyribose 5'-phosphate)-DNA + a 5'-end 5'-phospho-2'-deoxyribonucleoside-DNA + H(+). In terms of biological role, involved in base excision repair of DNA damaged by oxidation or by mutagenic agents. Acts as a DNA glycosylase that recognizes and removes damaged bases. Has a preference for oxidized purines, such as 7,8-dihydro-8-oxoguanine (8-oxoG). Has AP (apurinic/apyrimidinic) lyase activity and introduces nicks in the DNA strand. Cleaves the DNA backbone by beta-delta elimination to generate a single-strand break at the site of the removed base with both 3'- and 5'-phosphates. The polypeptide is Formamidopyrimidine-DNA glycosylase (Acidithiobacillus ferrooxidans (strain ATCC 23270 / DSM 14882 / CIP 104768 / NCIMB 8455) (Ferrobacillus ferrooxidans (strain ATCC 23270))).